A 912-amino-acid chain; its full sequence is MAAEKGESSDEERKPLTRDSMEYRDSSNSLHYSSSAASLSLAVIDRINGSTHDTGPNEIGRGDRDYSDDGEYDLEEADYIPSGGKPVQKKVKIVLGFLLFLCLSGWSLSFVLFLFGGHESSKTSNVYDDNISDTGSQGNKITLDEVLDGTWSPAFHDISWIPGPNGEDGLLLERGASISNGYLRVEDIVSRKDPKSSKKPIVLMQKAYFNVSGEAVFPSRVWPSPDLKTVLVLSNEEKNWRHSFTGKYWLFDVESQTGQPLDPAAKDQRVQLASWSPRSDAVVFTRDNNMFLRKLSSNEVMKITTNGGVNLFYGVPDWVYEEEVYSGNSVTWWADDGEYIAFLRTNESSVPEYPVQYFVSLPNGEISKPGEESYPETRKIKYPKAGAPNPIVDLQFFDVGKDEVFSVDIKGDFADSNRLITEVVWASNGKVIVRSTNRESDVLHVAVIDVLSRTGKIVRKEDINALDGGWVEPSQTARFIPADPDNGRLNDGYIDTVIYEGRDQLAYYTPVDNPNPIVLTKGHSEVVQAPSGVDLKRGLVYFVVAGNEPWERHIYSVNFDGTSIQPVTNVSESSYYDVSFSNGAGYAFLKYAGPQVPWQKVISTPANEVTFEETIEENNRLSERLRQYTLESKIYQYIDIDGFSLPVLERRPPNFNQTKKYPVLFYLYGGPGSQTVNKKFNVDFQSYVAANLGYIVVTVDGRGTGFIGRKARCVIRGNLGHFESRDQIQAAKIWAAKPYVDESRISIWGWSYGGFMALKTIEQDGGRTFKYGIAVAPVTDWRYYDSIYTERYMHTPQRNPGGYDNAAISNTTALANNIRFLVMHGTADDNVHIQNSLTFIDKLDVNNVHNYDVHFFPDSDHSIYFHNAHKIVYSRLADWLVNAFNGEWLKTYNPAPNDSIFRRAAIWVGLSI.

Over residues 1 to 25 the composition is skewed to basic and acidic residues; that stretch reads MAAEKGESSDEERKPLTRDSMEYRD. Disordered stretches follow at residues 1 to 31 and 49 to 70; these read MAAE…NSLH and GSTH…SDDG. The Cytoplasmic segment spans residues 1–92; that stretch reads MAAEKGESSD…GGKPVQKKVK (92 aa). Residues 93-113 form a helical; Signal-anchor for type II membrane protein membrane-spanning segment; sequence IVLGFLLFLCLSGWSLSFVLF. Residues 114–912 are Vacuolar-facing; it reads LFGGHESSKT…RAAIWVGLSI (799 aa). 5 N-linked (GlcNAc...) asparagine glycosylation sites follow: asparagine 130, asparagine 210, asparagine 346, asparagine 569, and asparagine 656. Serine 751 acts as the Charge relay system in catalysis. The N-linked (GlcNAc...) asparagine glycan is linked to asparagine 810. Residues aspartate 828 and histidine 861 each act as charge relay system in the active site. Asparagine 897 carries N-linked (GlcNAc...) asparagine glycosylation.

This sequence belongs to the peptidase S9B family.

Its subcellular location is the vacuole membrane. It carries out the reaction Release of an N-terminal dipeptide, Xaa-Yaa-|-Zaa-, from a polypeptide, preferentially when Yaa is Pro, provided Zaa is neither Pro nor hydroxyproline.. In terms of biological role, type IV dipeptidyl-peptidase which removes N-terminal dipeptides sequentially from polypeptides having unsubstituted N-termini provided that the penultimate residue is proline. This is Probable dipeptidyl-aminopeptidase B (DAPB) from Paracoccidioides lutzii (strain ATCC MYA-826 / Pb01) (Paracoccidioides brasiliensis).